The chain runs to 257 residues: Acetylglutamate kinase (257 aa).

Residues 43 to 44 (GG), arginine 65, and asparagine 157 contribute to the substrate site. ATP contacts are provided by residues 180–185 (DVSGIL) and 208–210 (IIT).

It belongs to the acetylglutamate kinase family. ArgB subfamily. As to quaternary structure, homodimer.

The protein localises to the cytoplasm. It catalyses the reaction N-acetyl-L-glutamate + ATP = N-acetyl-L-glutamyl 5-phosphate + ADP. It functions in the pathway amino-acid biosynthesis; L-arginine biosynthesis; N(2)-acetyl-L-ornithine from L-glutamate: step 2/4. Its function is as follows. Catalyzes the ATP-dependent phosphorylation of N-acetyl-L-glutamate. The chain is Acetylglutamate kinase from Salmonella paratyphi B (strain ATCC BAA-1250 / SPB7).